A 337-amino-acid polypeptide reads, in one-letter code: Glyceraldehyde-3-phosphate dehydrogenase 3, cytosolic (337 aa).

Residues 13 to 14, aspartate 35, and arginine 82 each bind NAD(+); that span reads RI. D-glyceraldehyde 3-phosphate is bound by residues 153-155, threonine 184, 213-214, and arginine 236; these read SCT and TG. The active-site Nucleophile is the cysteine 154. Asparagine 318 contacts NAD(+).

Belongs to the glyceraldehyde-3-phosphate dehydrogenase family. In terms of assembly, homotetramer.

It is found in the cytoplasm. The enzyme catalyses D-glyceraldehyde 3-phosphate + phosphate + NAD(+) = (2R)-3-phospho-glyceroyl phosphate + NADH + H(+). It participates in carbohydrate degradation; glycolysis; pyruvate from D-glyceraldehyde 3-phosphate: step 1/5. In terms of biological role, key enzyme in glycolysis that catalyzes the first step of the pathway by converting D-glyceraldehyde 3-phosphate (G3P) into 3-phospho-D-glyceroyl phosphate. Essential for the maintenance of cellular ATP levels and carbohydrate metabolism. The protein is Glyceraldehyde-3-phosphate dehydrogenase 3, cytosolic (GAPC3) of Oryza sativa subsp. japonica (Rice).